A 155-amino-acid polypeptide reads, in one-letter code: 6,7-dimethyl-8-ribityllumazine synthase (155 aa).

Residues F24, 58–60, and 82–84 contribute to the 5-amino-6-(D-ribitylamino)uracil site; these read AFE and VLI. Position 87-88 (87-88) interacts with (2S)-2-hydroxy-3-oxobutyl phosphate; sequence AT. H90 acts as the Proton donor in catalysis. F115 contributes to the 5-amino-6-(D-ribitylamino)uracil binding site. R129 is a (2S)-2-hydroxy-3-oxobutyl phosphate binding site.

It belongs to the DMRL synthase family.

The catalysed reaction is (2S)-2-hydroxy-3-oxobutyl phosphate + 5-amino-6-(D-ribitylamino)uracil = 6,7-dimethyl-8-(1-D-ribityl)lumazine + phosphate + 2 H2O + H(+). Its pathway is cofactor biosynthesis; riboflavin biosynthesis; riboflavin from 2-hydroxy-3-oxobutyl phosphate and 5-amino-6-(D-ribitylamino)uracil: step 1/2. Functionally, catalyzes the formation of 6,7-dimethyl-8-ribityllumazine by condensation of 5-amino-6-(D-ribitylamino)uracil with 3,4-dihydroxy-2-butanone 4-phosphate. This is the penultimate step in the biosynthesis of riboflavin. The chain is 6,7-dimethyl-8-ribityllumazine synthase from Chloroherpeton thalassium (strain ATCC 35110 / GB-78).